The sequence spans 931 residues: Netrin receptor UNC5C (931 aa).

The signal sequence occupies residues 1-40; that stretch reads MRKGLRATAARCGLGLGYLLQMLVLPALALLSASGTGSAA. Over 41 to 380 the chain is Extracellular; the sequence is QDDDFFHELP…APDSDDVALY (340 aa). The Ig-like domain maps to 62–159; the sequence is PHFLIEPEEA…AGTTKSRKAY (98 aa). Cystine bridges form between cysteine 83–cysteine 144, cysteine 95–cysteine 142, cysteine 188–cysteine 239, cysteine 272–cysteine 309, cysteine 276–cysteine 313, cysteine 287–cysteine 299, cysteine 328–cysteine 362, cysteine 332–cysteine 367, and cysteine 340–cysteine 352. The Ig-like C2-type domain maps to 161-256; it reads RIAYLRKTFE…KRKSTTATVI (96 aa). Asparagine 236 carries N-linked (GlcNAc...) asparagine glycosylation. TSP type-1 domains are found at residues 260-314 and 316-368; these read NGGW…TLCP and DGRW…GLCM. Asparagine 361 is a glycosylation site (N-linked (GlcNAc...) asparagine). The chain crosses the membrane as a helical span at residues 381-401; that stretch reads VGIVIAVIVCLAISVVVALFV. At 402 to 931 the chain is on the cytoplasmic side; the sequence is YRKNHRDFES…VVSLAAEGQY (530 aa). Positions 402 to 931 are required for netrin-mediated axon repulsion of neuronal growth cones; it reads YRKNHRDFES…VVSLAAEGQY (530 aa). Residue serine 502 is modified to Phosphoserine. The 144-residue stretch at 530–673 folds into the ZU5 domain; it reads CTAFGSFNSL…LSTYALVGHS (144 aa). Tyrosine 568 carries the phosphotyrosine modification. Residues 694 to 712 form an interaction with DCC region; the sequence is SLEYSIRVYCLDDTQDALK. The region spanning 850 to 929 is the Death domain; it reads QKLCSSLDAP…ETVVSLAAEG (80 aa).

The protein belongs to the unc-5 family. In terms of assembly, interacts with DCC (via cytoplasmic domain). Interacts (tyrosine phosphorylated form) with PTPN11. Interacts (via extracellular domain) with FLRT3 (via extracellular domain). Interacts (via Ig-like C2-type domain) with DSCAM (via extracellular domain). Interacts (via death domain) with DAPK1. Interacts (via cytoplasmic domain) with TUBB3; this interaction is decreased by NTN1/Netrin-1. Proteolytically cleaved by caspases during apoptosis. The cleavage does not take place when the receptor is associated with netrin ligand. Its cleavage by caspases is required to induce apoptosis. In terms of processing, phosphorylated on different cytoplasmic tyrosine residues. Phosphorylation of Tyr-568 leads to an interaction with PTPN11 phosphatase, suggesting that its activity is regulated by phosphorylation/dephosphorylation. Tyrosine phosphorylation is netrin-dependent. As to expression, mainly expressed in brain. Expressed in temporal lobe cortical neurons and in neurons of the hippocampal pyramidal layer. Also expressed in kidney. Not expressed in developing or adult lung.

The protein resides in the cell membrane. It is found in the cell surface. The protein localises to the synapse. Its subcellular location is the synaptosome. It localises to the cell projection. The protein resides in the axon. It is found in the dendrite. The protein localises to the growth cone. Its subcellular location is the lamellipodium. It localises to the filopodium. Its function is as follows. Receptor for netrin required for axon guidance. Mediates axon repulsion of neuronal growth cones in the developing nervous system upon ligand binding. NTN1/Netrin-1 binding might cause dissociation of UNC5C from polymerized TUBB3 in microtubules and thereby lead to increased microtubule dynamics and axon repulsion. Axon repulsion in growth cones may also be caused by its association with DCC that may trigger signaling for repulsion. Might also collaborate with DSCAM in NTN1-mediated axon repulsion independently of DCC. Also involved in corticospinal tract axon guidance independently of DCC. Involved in dorsal root ganglion axon projection towards the spinal cord. It also acts as a dependence receptor required for apoptosis induction when not associated with netrin ligand. The polypeptide is Netrin receptor UNC5C (UNC5C) (Homo sapiens (Human)).